The primary structure comprises 1341 residues: DNA-directed RNA polymerase subunit beta (1341 aa).

This sequence belongs to the RNA polymerase beta chain family. The RNAP catalytic core consists of 2 alpha, 1 beta, 1 beta' and 1 omega subunit. When a sigma factor is associated with the core the holoenzyme is formed, which can initiate transcription.

It catalyses the reaction RNA(n) + a ribonucleoside 5'-triphosphate = RNA(n+1) + diphosphate. In terms of biological role, DNA-dependent RNA polymerase catalyzes the transcription of DNA into RNA using the four ribonucleoside triphosphates as substrates. The chain is DNA-directed RNA polymerase subunit beta from Blochmanniella pennsylvanica (strain BPEN).